The following is a 235-amino-acid chain: 2,3,4,5-tetrahydropyridine-2,6-dicarboxylate N-acetyltransferase (235 aa).

Belongs to the transferase hexapeptide repeat family. DapH subfamily.

It carries out the reaction (S)-2,3,4,5-tetrahydrodipicolinate + acetyl-CoA + H2O = L-2-acetamido-6-oxoheptanedioate + CoA. It functions in the pathway amino-acid biosynthesis; L-lysine biosynthesis via DAP pathway; LL-2,6-diaminopimelate from (S)-tetrahydrodipicolinate (acetylase route): step 1/3. Functionally, catalyzes the transfer of an acetyl group from acetyl-CoA to tetrahydrodipicolinate. This Anoxybacillus flavithermus (strain DSM 21510 / WK1) protein is 2,3,4,5-tetrahydropyridine-2,6-dicarboxylate N-acetyltransferase.